Here is a 315-residue protein sequence, read N- to C-terminus: Fucose-specific lectin (315 aa).

Repeat copies occupy residues 2–53, 54–103, 104–155, 156–207, 208–260, and 261–315. The tract at residues 2–315 is 6 X approximate tandem repeats; it reads STPGAQQVLF…QLGRSALPPA (314 aa). The alpha-L-fucose site is built by Arg25, Glu37, Trp44, Arg73, Glu85, Trp94, Gly98, Arg126, Glu138, Trp146, Thr150, Arg177, Gln189, Trp198, Arg230, and Gln242. Zn(2+)-binding residues include Cys244, Asp246, and His252. The alpha-L-fucose site is built by Arg282 and Glu296.

The protein belongs to the fungal fucose-specific lectin family. In terms of assembly, homodimer.

In terms of biological role, multispecific lectin that is able to recognize L-fucose in all possible linkages. These could be found not only in decomposed plant matter in soil, which is the natural environment for A.fumigatus, but also in various epitopes on human tissues. Mediates binding of A.fumigatus conidia to airway mucin in a fucose dependent manner. Stimulates IL-8 production by human bronchial cells in a dose-dependent manner, contributing to the inflammatory response observed upon the exposure of a patient to A.fumigatus, and thus might be an important virulence factor involved in an early stage of A.fumigatus infection. This chain is Fucose-specific lectin, found in Aspergillus fumigatus (strain ATCC MYA-4609 / CBS 101355 / FGSC A1100 / Af293) (Neosartorya fumigata).